Reading from the N-terminus, the 190-residue chain is Prostaglandin-H2 D-isomerase (190 aa).

An N-terminal signal peptide occupies residues 1–22 (MATHHTLWMGLALLGVLGDLQA). S29 carries O-linked (GalNAc...) serine glycosylation. N-linked (GlcNAc...) (complex) asparagine glycosylation occurs at N51. C65 functions as the Nucleophile in the catalytic mechanism. N-linked (GlcNAc...) (complex) asparagine glycosylation is present at N78. An intrachain disulfide couples C89 to C186.

It belongs to the calycin superfamily. Lipocalin family. In terms of assembly, monomer. N- and O-glycosylated. Both N-glycosylation recognition sites are almost quantitatively occupied by N-glycans of the biantennary complex type, with a considerable proportion of structures bearing a bisecting GlcNAc. N-glycan at Asn-78: dHex1Hex5HexNAc4. Agalacto structure as well as sialylated and nonsialylated oligosaccharides bearing alpha2-3- and/or alpha2-6-linked NeuNAc are present. As to expression, abundant in the brain and CNS, where it is expressed in tissues of the blood-brain barrier and secreted into the cerebro-spinal fluid. Abundantly expressed in the heart. In the male reproductive system, it is expressed in the testis, epididymis and prostate, and is secreted into the seminal fluid. Expressed in the eye and secreted into the aqueous humor. Lower levels detected in various tissue fluids such as serum, normal urine, ascitic fluid and tear fluid. Also found in a number of other organs including ovary, fimbriae of the fallopian tubes, kidney, leukocytes.

The protein resides in the rough endoplasmic reticulum. It is found in the nucleus membrane. It localises to the golgi apparatus. The protein localises to the cytoplasm. Its subcellular location is the perinuclear region. The protein resides in the secreted. It catalyses the reaction prostaglandin H2 = prostaglandin D2. In terms of biological role, catalyzes the conversion of PGH2 to PGD2, a prostaglandin involved in smooth muscle contraction/relaxation and a potent inhibitor of platelet aggregation. Involved in a variety of CNS functions, such as sedation, NREM sleep and PGE2-induced allodynia, and may have an anti-apoptotic role in oligodendrocytes. Binds small non-substrate lipophilic molecules, including biliverdin, bilirubin, retinal, retinoic acid and thyroid hormone, and may act as a scavenger for harmful hydrophobic molecules and as a secretory retinoid and thyroid hormone transporter. Possibly involved in development and maintenance of the blood-brain, blood-retina, blood-aqueous humor and blood-testis barrier. It is likely to play important roles in both maturation and maintenance of the central nervous system and male reproductive system. Involved in PLA2G3-dependent maturation of mast cells. PLA2G3 is secreted by immature mast cells and acts on nearby fibroblasts upstream to PTDGS to synthesize PGD2, which in turn promotes mast cell maturation and degranulation via PTGDR. The protein is Prostaglandin-H2 D-isomerase (PTGDS) of Homo sapiens (Human).